The following is a 629-amino-acid chain: MASESTNGKQARSHVTKGRRQYQHQHQQQQQQQQQVRSRSSVSECDGDDSFIFEANEAWKDFHGSLLGFYENGELCDVTLKVGSKLISCHKLVLACVIPYFRAMFLSEMSEAKQALIEIRDFDGDAVEDLVKFVYSSRLTLTVDNVQPLLYAACILQVELVARACCEYMQLHFHPSNCLAVRAFAESHNRIDLMDMADQYACEHFTEVVECEDFVSVSPQHLHKLLSSSDLNIDSEKQVYSAAIKWLLANPQHHPKWLDETLAQVRLPLLPVDFLMGVVAKEQIVKQNLKCRDLLDEARNYHLHLSSKPVPDFEYTVRTTPRKHTAGVLFCVGGRGGSGDPFRSIECYSINKNSWFFGPEMNSRRRHVGVISVEGKVYAVGGHDGNEHLGSMEMFDPLTNKWMMKASMNTKRRGIALASLGGPIYAIGGLDDNTCFSDVERYDIESDQWSTVAPMNTPRGGVGSVALINHVYAVGGNDGVASLSSVERYHPHLDKWIEVKEMGQRRAGNGVSELHGCLYVVGGFDDNSPLSSVERYDPRSNKWDYVAALTTPRGGVGIATVMGKIFAVGGHNGNAYLNTVEAFDPVLNKWELVGPVSHCRAGAGVAVCDCLTSQIRDVGHGSTNVVDCM.

The span at 1-10 shows a compositional bias: polar residues; the sequence is MASESTNGKQ. Residues 1–40 form a disordered region; sequence MASESTNGKQARSHVTKGRRQYQHQHQQQQQQQQQVRSRS. An N-acetylalanine modification is found at Ala-2. Basic residues predominate over residues 11 to 23; the sequence is ARSHVTKGRRQYQ. A compositionally biased stretch (low complexity) spans 24-35; the sequence is HQHQQQQQQQQQ. One can recognise a BTB domain in the interval 76–143; that stretch reads CDVTLKVGSK…VYSSRLTLTV (68 aa). A BACK domain is found at 178-279; sequence CLAVRAFAES…LPVDFLMGVV (102 aa). Kelch repeat units follow at residues 328 to 375, 376 to 422, 424 to 469, 471 to 516, 517 to 563, and 565 to 610; these read VLFC…SVEG, KVYA…SLGG, IYAI…ALIN, VYAV…ELHG, CLYV…TVMG, and IFAV…VCDC.

In terms of assembly, component of the BCR(KLHL8) E3 ubiquitin ligase complex, at least composed of CUL3, KLHL8 and RBX1. Interacts with RAPSN.

It participates in protein modification; protein ubiquitination. Substrate-specific adapter of a BCR (BTB-CUL3-RBX1) E3 ubiquitin ligase complex required for The BCR(KLHL8) ubiquitin ligase complex mediates ubiquitination and degradation of RAPSN. In Mus musculus (Mouse), this protein is Kelch-like protein 8 (Klhl8).